A 558-amino-acid chain; its full sequence is Glucose-6-phosphate isomerase (558 aa).

A2 is subject to N-acetylalanine. N6-acetyllysine is present on K12. N6-(2-hydroxyisobutyryl)lysine is present on K34. S107 bears the Phosphoserine mark. A Phosphothreonine modification is found at T109. The residue at position 142 (K142) is an N6-acetyllysine. Residue 159 to 160 coordinates D-glucose 6-phosphate; the sequence is GS. S185 is modified (phosphoserine; by CK2). 210 to 215 contacts D-glucose 6-phosphate; sequence SKTFTT. The residue at position 250 (T250) is a Phosphothreonine. D-glucose 6-phosphate is bound by residues Q354, E358, and H389. The Proton donor role is filled by E358. H389 is a catalytic residue. N6-acetyllysine; alternate is present on K454. Residue K454 is modified to N6-malonyllysine; alternate. N6-succinyllysine; alternate is present on K454. At S455 the chain carries Phosphoserine. K519 contacts D-glucose 6-phosphate. Residue K519 is part of the active site.

The protein belongs to the GPI family. Homodimer; in the catalytically active form. Monomer in the secreted form. Post-translationally, phosphorylation at Ser-185 by CK2 has been shown to decrease enzymatic activity and may contribute to secretion by a non-classical secretory pathway. ISGylated.

The protein resides in the cytoplasm. It is found in the secreted. It carries out the reaction alpha-D-glucose 6-phosphate = beta-D-fructose 6-phosphate. It participates in carbohydrate degradation; glycolysis; D-glyceraldehyde 3-phosphate and glycerone phosphate from D-glucose: step 2/4. In terms of biological role, in the cytoplasm, catalyzes the conversion of glucose-6-phosphate to fructose-6-phosphate, the second step in glycolysis, and the reverse reaction during gluconeogenesis. Besides it's role as a glycolytic enzyme, also acts as a secreted cytokine: acts as an angiogenic factor (AMF) that stimulates endothelial cell motility. Acts as a neurotrophic factor, neuroleukin, for spinal and sensory neurons. It is secreted by lectin-stimulated T-cells and induces immunoglobulin secretion. The sequence is that of Glucose-6-phosphate isomerase from Macaca fascicularis (Crab-eating macaque).